A 305-amino-acid polypeptide reads, in one-letter code: Small ribosomal subunit protein uS3 (305 aa).

Residues 17 to 86 form the KH type-2 domain; sequence IDEFFSEELS…DPQVDVQEVD (70 aa). Composition is skewed to acidic residues over residues 207-262 and 272-305; these read EPEG…EAET and AAEE…EEET. Residues 207–305 are disordered; it reads EPEGDVEELL…EDETTDEEET (99 aa).

The protein belongs to the universal ribosomal protein uS3 family. As to quaternary structure, part of the 30S ribosomal subunit.

Functionally, binds the lower part of the 30S subunit head. The chain is Small ribosomal subunit protein uS3 from Natronomonas pharaonis (strain ATCC 35678 / DSM 2160 / CIP 103997 / JCM 8858 / NBRC 14720 / NCIMB 2260 / Gabara) (Halobacterium pharaonis).